We begin with the raw amino-acid sequence, 488 residues long: Glutamyl-tRNA(Gln) amidotransferase subunit A (488 aa).

Active-site charge relay system residues include lysine 77 and serine 152. The active-site Acyl-ester intermediate is the serine 176.

Belongs to the amidase family. GatA subfamily. In terms of assembly, heterotrimer of A, B and C subunits.

The catalysed reaction is L-glutamyl-tRNA(Gln) + L-glutamine + ATP + H2O = L-glutaminyl-tRNA(Gln) + L-glutamate + ADP + phosphate + H(+). Allows the formation of correctly charged Gln-tRNA(Gln) through the transamidation of misacylated Glu-tRNA(Gln) in organisms which lack glutaminyl-tRNA synthetase. The reaction takes place in the presence of glutamine and ATP through an activated gamma-phospho-Glu-tRNA(Gln). The polypeptide is Glutamyl-tRNA(Gln) amidotransferase subunit A (Streptococcus sanguinis (strain SK36)).